Here is a 215-residue protein sequence, read N- to C-terminus: Nucleoside triphosphate pyrophosphatase (215 aa).

Asp-80 acts as the Proton acceptor in catalysis.

The protein belongs to the Maf family. A divalent metal cation serves as cofactor.

It is found in the cytoplasm. The catalysed reaction is a ribonucleoside 5'-triphosphate + H2O = a ribonucleoside 5'-phosphate + diphosphate + H(+). It carries out the reaction a 2'-deoxyribonucleoside 5'-triphosphate + H2O = a 2'-deoxyribonucleoside 5'-phosphate + diphosphate + H(+). In terms of biological role, nucleoside triphosphate pyrophosphatase. May have a dual role in cell division arrest and in preventing the incorporation of modified nucleotides into cellular nucleic acids. This Leifsonia xyli subsp. xyli (strain CTCB07) protein is Nucleoside triphosphate pyrophosphatase.